A 396-amino-acid polypeptide reads, in one-letter code: Elongation factor Tu (396 aa).

Positions 10 to 206 constitute a tr-type G domain; that stretch reads KPHVNVGTIG…ALDTYIPTPE (197 aa). Residues 19–26 form a G1 region; the sequence is GHVDHGKT. A GTP-binding site is contributed by 19–26; that stretch reads GHVDHGKT. Residue T26 coordinates Mg(2+). The tract at residues 60–64 is G2; the sequence is GITIN. The G3 stretch occupies residues 81-84; sequence DCPG. Residues 81-85 and 136-139 contribute to the GTP site; these read DCPGH and NKCD. Positions 136–139 are G4; the sequence is NKCD. The segment at 174-176 is G5; it reads SAK.

Belongs to the TRAFAC class translation factor GTPase superfamily. Classic translation factor GTPase family. EF-Tu/EF-1A subfamily. In terms of assembly, monomer.

Its subcellular location is the cytoplasm. It carries out the reaction GTP + H2O = GDP + phosphate + H(+). GTP hydrolase that promotes the GTP-dependent binding of aminoacyl-tRNA to the A-site of ribosomes during protein biosynthesis. The polypeptide is Elongation factor Tu (Burkholderia mallei (strain NCTC 10247)).